The primary structure comprises 427 residues: Glutamate-1-semialdehyde 2,1-aminomutase (427 aa).

An N6-(pyridoxal phosphate)lysine modification is found at Lys265.

It belongs to the class-III pyridoxal-phosphate-dependent aminotransferase family. HemL subfamily. In terms of assembly, homodimer. Requires pyridoxal 5'-phosphate as cofactor.

It localises to the cytoplasm. The enzyme catalyses (S)-4-amino-5-oxopentanoate = 5-aminolevulinate. It functions in the pathway porphyrin-containing compound metabolism; protoporphyrin-IX biosynthesis; 5-aminolevulinate from L-glutamyl-tRNA(Glu): step 2/2. The protein is Glutamate-1-semialdehyde 2,1-aminomutase of Pseudomonas aeruginosa (strain UCBPP-PA14).